The chain runs to 151 residues: Globin CTT-VIII (151 aa).

Residues 4 to 148 form the Globin domain; that stretch reads PMSADQLALF…MFFYILHALE (145 aa). His-62 and His-97 together coordinate heme b.

It belongs to the globin family. In terms of assembly, homodimer.

This chain is Globin CTT-VIII (CTT-8), found in Chironomus thummi thummi (Midge).